Consider the following 307-residue polypeptide: D-alanine--D-alanine ligase (307 aa).

In terms of domain architecture, ATP-grasp spans 101-301 (RDVLAAAGVP…FGELVRWMVD (201 aa)). 128–182 (LPPPYVIKPLGEGSSFGVFIVREDQAYPPQELTRSDWAFGNRVLVESYIGGRELT) is a binding site for ATP. Positions 251, 268, and 270 each coordinate Mg(2+).

Belongs to the D-alanine--D-alanine ligase family. It depends on Mg(2+) as a cofactor. The cofactor is Mn(2+).

The protein resides in the cytoplasm. It carries out the reaction 2 D-alanine + ATP = D-alanyl-D-alanine + ADP + phosphate + H(+). Its pathway is cell wall biogenesis; peptidoglycan biosynthesis. Cell wall formation. The polypeptide is D-alanine--D-alanine ligase (Beijerinckia indica subsp. indica (strain ATCC 9039 / DSM 1715 / NCIMB 8712)).